We begin with the raw amino-acid sequence, 160 residues long: Endoribonuclease YbeY (160 aa).

Zn(2+) is bound by residues His-112, His-116, and His-122. The interval 141–160 (ELGHPDPYACDDEEPPSKEK) is disordered.

Belongs to the endoribonuclease YbeY family. Zn(2+) serves as cofactor.

The protein resides in the cytoplasm. In terms of biological role, single strand-specific metallo-endoribonuclease involved in late-stage 70S ribosome quality control and in maturation of the 3' terminus of the 16S rRNA. This Pseudomonas aeruginosa (strain UCBPP-PA14) protein is Endoribonuclease YbeY.